A 429-amino-acid polypeptide reads, in one-letter code: Small ribosomal subunit protein mS47 (429 aa).

Glu-141, Gly-166, Glu-189, and Asp-197 together coordinate substrate.

It belongs to the enoyl-CoA hydratase/isomerase family. Mitochondrion-specific ribosomal protein mS47 subfamily. As to quaternary structure, component of the mitochondrial small ribosomal subunit (mt-SSU). Mature yeast 74S mitochondrial ribosomes consist of a small (37S) and a large (54S) subunit. The 37S small subunit contains a 15S ribosomal RNA (15S mt-rRNA) and at least 32 different proteins. The 54S large subunit contains a 21S rRNA (21S mt-rRNA) and at least 45 different proteins. mS47/snr1 forms a protuberance of the yeast mitoribosome and retains a solvent-exposed cavity likely capable of accommodating a substrate, in accordance with it being an active enzyme as well as an integral constituent of the mitoribosome.

The protein resides in the mitochondrion. The enzyme catalyses 3-hydroxy-2-methylpropanoyl-CoA + H2O = 3-hydroxy-2-methylpropanoate + CoA + H(+). It functions in the pathway amino-acid degradation; L-valine degradation. Component of the mitochondrial ribosome (mitoribosome), a dedicated translation machinery responsible for the synthesis of mitochondrial genome-encoded proteins, including at least some of the essential transmembrane subunits of the mitochondrial respiratory chain. The mitoribosomes are attached to the mitochondrial inner membrane and translation products are cotranslationally integrated into the membrane. mS47/snr1 has enzymatic activity in vitro, and is able to catalyze the specific hydrolysis of 3-hydroxyisobutyryl-CoA (HIBYL-CoA). However, because the turnover rate of mS47/snr1 is only a fraction of that of the homologous mammalian enzyme, the physiological function of this activity remains unclear. Has an indirect role in endocytic membrane trafficking. In Schizosaccharomyces pombe (strain 972 / ATCC 24843) (Fission yeast), this protein is Small ribosomal subunit protein mS47 (snr1).